An 89-amino-acid chain; its full sequence is Small ribosomal subunit protein uS14 (89 aa).

It belongs to the universal ribosomal protein uS14 family. As to quaternary structure, part of the 30S ribosomal subunit. Contacts proteins S3 and S10.

Functionally, binds 16S rRNA, required for the assembly of 30S particles and may also be responsible for determining the conformation of the 16S rRNA at the A site. This is Small ribosomal subunit protein uS14 from Lacticaseibacillus casei (strain BL23) (Lactobacillus casei).